We begin with the raw amino-acid sequence, 227 residues long: 6-phosphogluconolactonase (227 aa).

Belongs to the glucosamine/galactosamine-6-phosphate isomerase family. 6-phosphogluconolactonase subfamily.

It catalyses the reaction 6-phospho-D-glucono-1,5-lactone + H2O = 6-phospho-D-gluconate + H(+). It participates in carbohydrate degradation; pentose phosphate pathway; D-ribulose 5-phosphate from D-glucose 6-phosphate (oxidative stage): step 2/3. In terms of biological role, hydrolysis of 6-phosphogluconolactone to 6-phosphogluconate. The sequence is that of 6-phosphogluconolactonase (pgl) from Helicobacter pylori (strain J99 / ATCC 700824) (Campylobacter pylori J99).